The primary structure comprises 313 residues: Olfactory receptor 6E1 (313 aa).

Asparagine 3 is a glycosylation site (N-linked (GlcNAc...) asparagine). 7 helical membrane passes run 25 to 45 (IFLG…LIIF), 64 to 84 (FAML…TNII), 96 to 116 (FLQA…LAVM), 142 to 162 (LVFC…SIVF), 192 to 212 (LVEF…LAVT), 238 to 258 (TCSS…FMYV), and 271 to 291 (KVVA…IYTL). The cysteines at positions 95 and 177 are disulfide-linked.

The protein belongs to the G-protein coupled receptor 1 family.

The protein localises to the cell membrane. Its function is as follows. Odorant receptor. Activated by (-)-citronellal and to a lesser extent by (+)-citronellal. Not activated by carvone or limonene. This is Olfactory receptor 6E1 from Mus musculus (Mouse).